Here is a 223-residue protein sequence, read N- to C-terminus: Lipoprotein signal peptidase (223 aa).

A disordered region spans residues 1 to 20 (MNSAKVNPSGHAPTPAPTAS). The next 4 membrane-spanning stretches (helical) occupy residues 32–52 (LFFGLAIAGGALDLWSKEAIF), 65–85 (WIIEGYFGIETAVNIGAVFGL), 91–111 (LVFAAISVFAAAAIIAWLFFF), and 116–136 (SCWLTFALGCITGGIIGNLYD). Residues D156 and D175 contribute to the active site. The chain crosses the membrane as a helical span at residues 173–193 (IADSLLVTGAIMLLVQSFFFP). Residues 196–223 (PHGEADGNELPGRRAPDEPTEGTKPAAS) form a disordered region.

It belongs to the peptidase A8 family.

The protein resides in the cell inner membrane. It carries out the reaction Release of signal peptides from bacterial membrane prolipoproteins. Hydrolyzes -Xaa-Yaa-Zaa-|-(S,diacylglyceryl)Cys-, in which Xaa is hydrophobic (preferably Leu), and Yaa (Ala or Ser) and Zaa (Gly or Ala) have small, neutral side chains.. It functions in the pathway protein modification; lipoprotein biosynthesis (signal peptide cleavage). In terms of biological role, this protein specifically catalyzes the removal of signal peptides from prolipoproteins. The protein is Lipoprotein signal peptidase of Rhodopirellula baltica (strain DSM 10527 / NCIMB 13988 / SH1).